The chain runs to 395 residues: Probable hercynylcysteine sulfoxide lyase (395 aa).

The interval 1 to 21 (MQDEAMRRSGANSPAGDSLAD) is disordered. Residue Lys-220 is modified to N6-(pyridoxal phosphate)lysine.

Belongs to the class-V pyridoxal-phosphate-dependent aminotransferase family. EgtE subfamily. The cofactor is pyridoxal 5'-phosphate.

The catalysed reaction is S-(hercyn-2-yl)-L-cysteine S-oxide + AH2 + H(+) = ergothioneine + pyruvate + A + NH4(+). It functions in the pathway amino-acid biosynthesis; ergothioneine biosynthesis. Its function is as follows. Probably catalyzes the conversion of hercynylcysteine sulfoxide to ergothioneine. ERG is one of the major redox buffers which protects bacteria against redox stressors and antibiotics; loss of ERG or mycothiol (MSH, the other major redox buffer in this bacteria) leads to respiratory alterations and bioenergetic deficiencies that negatively impact virulence. In Mycobacterium tuberculosis (strain CDC 1551 / Oshkosh), this protein is Probable hercynylcysteine sulfoxide lyase.